Consider the following 248-residue polypeptide: Urease accessory protein UreG 1 (248 aa).

Over residues 1 to 14 (MLPEHHDHGHEHGG) the composition is skewed to basic and acidic residues. The interval 1–36 (MLPEHHDHGHEHGGNGHGHGHRHQVNFDPTAAEPDP) is disordered. 53 to 60 (GPVGSGKT) is a GTP binding site.

It belongs to the SIMIBI class G3E GTPase family. UreG subfamily. In terms of assembly, homodimer. UreD, UreF and UreG form a complex that acts as a GTP-hydrolysis-dependent molecular chaperone, activating the urease apoprotein by helping to assemble the nickel containing metallocenter of UreC. The UreE protein probably delivers the nickel.

The protein resides in the cytoplasm. Its function is as follows. Facilitates the functional incorporation of the urease nickel metallocenter. This process requires GTP hydrolysis, probably effectuated by UreG. This chain is Urease accessory protein UreG 1, found in Saccharopolyspora erythraea (strain ATCC 11635 / DSM 40517 / JCM 4748 / NBRC 13426 / NCIMB 8594 / NRRL 2338).